Reading from the N-terminus, the 341-residue chain is Tubulin beta chain (341 aa).

Ser-64, Gly-68, Thr-69, Gly-70, Asn-130, and Asn-152 together coordinate GTP.

It belongs to the tubulin family. In terms of assembly, dimer of alpha and beta chains. A typical microtubule is a hollow water-filled tube with an outer diameter of 25 nm and an inner diameter of 15 nM. Alpha-beta heterodimers associate head-to-tail to form protofilaments running lengthwise along the microtubule wall with the beta-tubulin subunit facing the microtubule plus end conferring a structural polarity. Microtubules usually have 13 protofilaments but different protofilament numbers can be found in some organisms and specialized cells. The cofactor is Mg(2+).

Its subcellular location is the cytoplasm. The protein localises to the cytoskeleton. In terms of biological role, tubulin is the major constituent of microtubules, a cylinder consisting of laterally associated linear protofilaments composed of alpha- and beta-tubulin heterodimers. Microtubules grow by the addition of GTP-tubulin dimers to the microtubule end, where a stabilizing cap forms. Below the cap, tubulin dimers are in GDP-bound state, owing to GTPase activity of alpha-tubulin. The polypeptide is Tubulin beta chain (Haliotis discus (Abalone)).